A 324-amino-acid polypeptide reads, in one-letter code: MDLAAIYKSLLSLSPELPSDLGETESSTSWASSGPWSLSSSDSSLPEVAARLPGRSTSLVEGRSCGWVPPPPGFAPLAPRPSSDWSPSPTSPTATPTTSSRYKTELCRTFSESGRCRYGAKCQFAHGLGELRQASRHPKYKTELCHKFYLQGRCPYGSRCHFIHNPSEDLAAPGHPHVLRQSISFSGLPSGRRTSPPPASLAGPSVSSWSFSPSSSPPPPPGDLLLSPSAFSAAPGHLCRRDPTPACCPSCRRATPNSVWGPVGGLARSPSAHSLGSDPDEYASSGTSLGGSDSPVFEAGVFGPPQPPAAPRRLPIFNRISVSE.

The necessary for nuclear export stretch occupies residues 1-15; sequence MDLAAIYKSLLSLSP. Residues 1 to 98 form a necessary and sufficient for the association with mRNA decay enzymes and mRNA decay activation region; sequence MDLAAIYKSL…PTSPTATPTT (98 aa). 2 necessary for localization of ARE-containing mRNAs to processing bodies (PBs) regions span residues 1-172 and 98-324; these read MDLA…DLAA and TSSR…SVSE. Residues 15–46 show a composition bias toward low complexity; the sequence is PELPSDLGETESSTSWASSGPWSLSSSDSSLP. Residues 15-50 are disordered; sequence PELPSDLGETESSTSWASSGPWSLSSSDSSLPEVAA. S58 is subject to Phosphoserine; by MAPKAPK2. S64 carries the phosphoserine modification. One copy of the P-P-P-P-G repeat lies at 69–73; it reads PPPPG. A disordered region spans residues 76–100; it reads PLAPRPSSDWSPSPTSPTATPTTSS. Residues S86 and S88 each carry the phosphoserine modification. T90 carries the phosphothreonine modification. S91 bears the Phosphoserine mark. Positions 93 to 166 are necessary for nuclear localization; it reads TATPTTSSRY…GSRCHFIHNP (74 aa). The necessary for RNA-binding stretch occupies residues 95 to 171; sequence TPTTSSRYKT…FIHNPSEDLA (77 aa). 2 C3H1-type zinc fingers span residues 101–129 and 139–167; these read RYKT…HGLG and KYKT…HNPS. The interval 101-192 is necessary for interaction with PABPN1; that stretch reads RYKTELCRTF…ISFSGLPSGR (92 aa). S167 is modified (phosphoserine). Positions 172–324 are necessary for mRNA decay activation; it reads APGHPHVLRQ…PIFNRISVSE (153 aa). Phosphoserine; by MAPKAPK2 is present on S184. 2 disordered regions span residues 185 to 227 and 270 to 324; these read FSGL…LLLS and PSAH…SVSE. S195 bears the Phosphoserine mark. A P-P-P-P-G repeat occupies 196–200; the sequence is PPPAS. Positions 204–214 are enriched in low complexity; that stretch reads PSVSSWSFSPS. Phosphoserine is present on S216. A P-P-P-P-G repeat occupies 218–222; that stretch reads PPPPG. S227 bears the Phosphoserine; by MAPK1; in vitro mark. Residues S274, S294, and S321 each carry the phosphoserine modification. An interaction with CNOT1 region spans residues 310–324; the sequence is APRRLPIFNRISVSE.

In terms of assembly, associates with cytoplasmic CCR4-NOT and PAN2-PAN3 deadenylase complexes to trigger ARE-containing mRNA deadenylation and decay processes. Part of a mRNA decay activation complex at least composed of poly(A)-specific exoribonucleases CNOT6, EXOSC2 and XRN1 and mRNA-decapping enzymes DCP1A and DCP2. Associates with the RNA exosome complex. Interacts (via phosphorylated form) with 14-3-3 proteins; these interactions promote exclusion of ZFP36 from cytoplasmic stress granules in response to arsenite treatment in a MAPKAPK2-dependent manner and does not prevent CCR4-NOT deadenylase complex recruitment or ZFP36-induced ARE-containing mRNA deadenylation and decay processes. Interacts with 14-3-3 proteins; these interactions occur in response to rapamycin in an Akt-dependent manner. Interacts with AGO2 and AGO4. Interacts (via C-terminus) with CNOT1; this interaction occurs in a RNA-independent manner and induces mRNA deadenylation. Interacts (via N-terminus) with CNOT6. Interacts with CNOT6L. Interacts (via C-terminus) with CNOT7; this interaction occurs in a RNA-independent manner, induces mRNA deadenylation and is inhibited in a phosphorylation MAPKAPK2-dependent manner. Interacts (via unphosphorylated form) with CNOT8; this interaction occurs in a RNA-independent manner and is inhibited in a phosphorylation MAPKAPK2-dependent manner. Interacts with DCP1A. Interacts (via N-terminus) with DCP2. Interacts with EDC3. Interacts (via N-terminus) with EXOSC2. Interacts with heat shock 70 kDa proteins. Interacts with KHSRP; this interaction increases upon cytokine-induced treatment. Interacts with MAP3K4; this interaction enhances the association with SH3KBP1/CIN85. Interacts with MAPKAPK2; this interaction occurs upon skeletal muscle satellite cell activation. Interacts with NCL. Interacts with NUP214; this interaction increases upon lipopolysaccharide (LPS) stimulation. Interacts with PABPC1; this interaction occurs in a RNA-dependent manner. Interacts (via hypophosphorylated form) with PABPN1 (via RRM domain and C-terminal arginine-rich region); this interaction occurs in the nucleus in a RNA-independent manner, decreases in presence of single-stranded poly(A) RNA-oligomer and in a p38 MAPK-dependent-manner and inhibits nuclear poly(A) tail synthesis. Interacts with PAN2. Interacts (via C3H1-type zinc finger domains) with PKM. Interacts (via C3H1-type zinc finger domains) with nuclear RNA poly(A) polymerase. Interacts with PPP2CA; this interaction occurs in LPS-stimulated cells and induces ZFP36 dephosphorylation, and hence may promote ARE-containing mRNAs decay. Interacts (via C-terminus) with PRR5L (via C-terminus); this interaction may accelerate ZFP36-mediated mRNA decay during stress. Interacts (via C-terminus) with SFN; this interaction occurs in a phosphorylation-dependent manner. Interacts (via extreme C-terminal region) with SH3KBP1/CIN85 (via SH3 domains); this interaction enhances MAP3K4-induced phosphorylation of ZFP36 at Ser-64 and Ser-91 and does not alter neither ZFP36 binding to ARE-containing transcripts nor TNF-alpha mRNA decay. Interacts with XRN1. Interacts (via C-terminus and Ser-184 phosphorylated form) with YWHAB; this interaction occurs in a p38/MAPKAPK2-dependent manner, increases cytoplasmic localization of ZFP36 and protects ZFP36 from Ser-184 dephosphorylation by serine/threonine phosphatase 2A, and hence may be crucial for stabilizing ARE-containing mRNAs. Interacts (via phosphorylated form) with YWHAE. Interacts (via C-terminus) with YWHAG; this interaction occurs in a phosphorylation-dependent manner. Interacts with YWHAH; this interaction occurs in a phosphorylation-dependent manner. Interacts with YWHAQ; this interaction occurs in a phosphorylation-dependent manner. Interacts with (via C-terminus) YWHAZ; this interaction occurs in a phosphorylation-dependent manner. Does not interact with SH3KBP1. Interacts (via P-P-P-P-G repeats) with GIGYF2; the interaction is direct. Phosphorylated. Phosphorylation at serine and/or threonine residues occurs in a p38 MAPK- and MAPKAPK2-dependent manner. Phosphorylated by MAPKAPK2 at Ser-58 and Ser-184; phosphorylation increases its stability and cytoplasmic localization, promotes binding to 14-3-3 adapter proteins and inhibits the recruitment of cytoplasmic CCR4-NOT and PAN2-PAN3 deadenylase complexes to the mRNA decay machinery, thereby inhibiting ZFP36-induced ARE-containing mRNA deadenylation and decay processes. Phosphorylation by MAPKAPK2 does not impair ARE-containing RNA-binding. Phosphorylated in a MAPKAPK2- and p38 MAPK-dependent manner upon skeletal muscle satellite cell activation; this phosphorylation inhibits ZFP36-mediated mRNA decay activity, and hence stabilizes MYOD1 mRNA. Phosphorylated by MAPK1 upon mitogen stimulation. Phosphorylated at Ser-64 and Ser-91; these phosphorylations increase in a SH3KBP1-dependent manner. Phosphorylated at serine and threonine residues in a pyruvate kinase PKM- and p38 MAPK-dependent manner. Phosphorylation at Ser-58 may participate in the PKM-mediated degradation of ZFP36 in a p38 MAPK-dependent manner. Dephosphorylated by serine/threonine phosphatase 2A at Ser-184. Post-translationally, ubiquitinated; pyruvate kinase (PKM)-dependent ubiquitination leads to proteasomal degradation through a p38 MAPK signaling pathway.

Its subcellular location is the nucleus. The protein resides in the cytoplasm. It is found in the cytoplasmic granule. The protein localises to the P-body. Functionally, zinc-finger RNA-binding protein that destabilizes numerous cytoplasmic AU-rich element (ARE)-containing mRNA transcripts by promoting their poly(A) tail removal or deadenylation, and hence provide a mechanism for attenuating protein synthesis. Acts as an 3'-untranslated region (UTR) ARE mRNA-binding adapter protein to communicate signaling events to the mRNA decay machinery. Recruits deadenylase CNOT7 (and probably the CCR4-NOT complex) via association with CNOT1, and hence promotes ARE-mediated mRNA deadenylation. Also functions by recruiting components of the cytoplasmic RNA decay machinery to the bound ARE-containing mRNAs. Self regulates by destabilizing its own mRNA. Binds to 3'-UTR ARE of numerous mRNAs. Also binds to ARE of its own mRNA. Plays a role in anti-inflammatory responses; suppresses tumor necrosis factor (TNF)-alpha production by stimulating ARE-mediated TNF-alpha mRNA decay and several other inflammatory ARE-containing mRNAs in interferon (IFN)- and/or lipopolysaccharide (LPS)-induced macrophages. Also plays a role in the regulation of dendritic cell maturation at the post-transcriptional level, and hence operates as part of a negative feedback loop to limit the inflammatory response. Promotes ARE-mediated mRNA decay of hypoxia-inducible factor HIF1A mRNA during the response of endothelial cells to hypoxia. Positively regulates early adipogenesis of preadipocytes by promoting ARE-mediated mRNA decay of immediate early genes (IEGs). Negatively regulates hematopoietic/erythroid cell differentiation by promoting ARE-mediated mRNA decay of the transcription factor STAT5B mRNA. Plays a role in maintaining skeletal muscle satellite cell quiescence by promoting ARE-mediated mRNA decay of the myogenic determination factor MYOD1 mRNA. Also associates with and regulates the expression of non-ARE-containing target mRNAs at the post-transcriptional level, such as MHC class I mRNAs. Participates in association with argonaute RISC catalytic components in the ARE-mediated mRNA decay mechanism; assists microRNA (miRNA) targeting ARE-containing mRNAs. May also play a role in the regulation of cytoplasmic mRNA decapping; enhances decapping of ARE-containing RNAs, in vitro. Involved in the delivery of target ARE-mRNAs to processing bodies (PBs). In addition to its cytosolic mRNA-decay function, affects nuclear pre-mRNA processing. Negatively regulates nuclear poly(A)-binding protein PABPN1-stimulated polyadenylation activity on ARE-containing pre-mRNA during LPS-stimulated macrophages. Also involved in the regulation of stress granule (SG) and P-body (PB) formation and fusion. Plays a role in the regulation of keratinocyte proliferation, differentiation and apoptosis. Plays a role as a tumor suppressor by inhibiting cell proliferation in breast cancer cells. The protein is mRNA decay activator protein ZFP36 of Bos taurus (Bovine).